Consider the following 541-residue polypeptide: uncharacterized protein (541 aa).

5 consecutive transmembrane segments (helical) span residues 4 to 23 (FVAN…LAIG), 30 to 47 (FSLG…FAAV), 57 to 79 (VYIL…AFFA), 91 to 113 (LAIT…IHLN), and 156 to 178 (LVAY…GLCA). 2 consecutive RCK C-terminal domains span residues 187–271 (QEAH…VLGD) and 273–354 (LPGD…LFGD). The next 5 membrane-spanning stretches (helical) occupy residues 362–384 (FNLF…EVPL), 389–411 (ALSL…VGRS), 424–446 (LALR…GASF), 456–478 (LTII…VVGY), and 516–538 (LGYT…VVLF).

It belongs to the AAE transporter (TC 2.A.81) family.

The protein resides in the cell membrane. This is an uncharacterized protein from Corynebacterium diphtheriae (strain ATCC 700971 / NCTC 13129 / Biotype gravis).